Here is an 810-residue protein sequence, read N- to C-terminus: Oligoxyloglucan-reducing end-specific xyloglucanase (810 aa).

Residues 1–28 (MRAKNGPGSWLALTAIATSLNTLALAAA) form the signal peptide. N32 carries an N-linked (GlcNAc...) asparagine glycan. The Nucleophile role is filled by D66. One copy of the BNR 1 repeat lies at 126–135 (FVSQDRGATF). N-linked (GlcNAc...) asparagine glycosylation occurs at N188. A BNR 2 repeat occupies 226 to 236 (YVTRDSGESWE). N298, N312, and N321 each carry an N-linked (GlcNAc...) asparagine glycan. The BNR 3 repeat unit spans residues 359–369 (YLSHDGGKSWK). The N-linked (GlcNAc...) asparagine glycan is linked to N455. D498 serves as the catalytic Proton donor. N-linked (GlcNAc...) asparagine glycosylation is present at N544. The BNR 4 repeat unit spans residues 554–564 (YSADGGSSWTK). N-linked (GlcNAc...) asparagine glycosylation is found at N573 and N612. Residues 617 to 626 (YVTTDLGQTW) form a BNR 5 repeat. The N-linked (GlcNAc...) asparagine glycan is linked to N638. BNR repeat units follow at residues 658–667 (YLSRDGGLSY), 705–716 (YHTRNFGKKWTK), and 759–769 (YRSDDNGKTWV).

This sequence belongs to the glycosyl hydrolase 74 family.

It is found in the secreted. It catalyses the reaction Hydrolysis of cellobiose from the reducing end of xyloglucans consisting of a beta-(1-&gt;4)-linked glucan carrying alpha-D-xylosyl groups on O-6 of the glucose residues. To be a substrate, the first residue must be unsubstituted, the second residue may bear a xylosyl group, whether further glycosylated or not, and the third residue, which becomes the new terminus by the action of the enzyme, is preferably xylosylated, but this xylose residue must not be further substituted.. Functionally, oligoxyloglucan-reducing end-specific xyloglucanase involved in degradation of xyloglucans. Releases the first two glycosyl segments from oligoxyloglucans. Active against cotton xyloglucan, tamarind xyloglucan and tamarind xyloglucan oligomers. This is Oligoxyloglucan-reducing end-specific xyloglucanase (xgcA) from Emericella nidulans (strain FGSC A4 / ATCC 38163 / CBS 112.46 / NRRL 194 / M139) (Aspergillus nidulans).